Here is a 582-residue protein sequence, read N- to C-terminus: Glutaredoxin domain-containing cysteine-rich protein CG12206 (582 aa).

Positions 217–227 are enriched in polar residues; it reads CETLDSGTGSD. Disordered regions lie at residues 217–244 and 260–300; these read CETL…VRSP and EADH…SCDS. Residues 291–300 show a composition bias toward low complexity; sequence SSNSSLSCDS. Residues 423–528 enclose the Glutaredoxin domain; it reads NVKNYMEKDV…QLLRPYKSIA (106 aa).

Belongs to the GRXCR1 family.

The chain is Glutaredoxin domain-containing cysteine-rich protein CG12206 from Drosophila melanogaster (Fruit fly).